The chain runs to 550 residues: Hydroxylamine reductase (550 aa).

The [2Fe-2S] cluster site is built by Cys3, Cys6, Cys18, and Cys25. 8 residues coordinate hybrid [4Fe-2O-2S] cluster: His249, Glu273, Cys317, Cys405, Cys433, Cys458, Glu492, and Lys494. Cys405 carries the cysteine persulfide modification.

Belongs to the HCP family. [2Fe-2S] cluster is required as a cofactor. The cofactor is hybrid [4Fe-2O-2S] cluster.

Its subcellular location is the cytoplasm. It carries out the reaction A + NH4(+) + H2O = hydroxylamine + AH2 + H(+). Catalyzes the reduction of hydroxylamine to form NH(3) and H(2)O. This Shigella flexneri serotype 5b (strain 8401) protein is Hydroxylamine reductase.